The primary structure comprises 139 residues: Putative pre-16S rRNA nuclease (139 aa).

Belongs to the YqgF nuclease family.

The protein resides in the cytoplasm. Functionally, could be a nuclease involved in processing of the 5'-end of pre-16S rRNA. The sequence is that of Putative pre-16S rRNA nuclease from Streptococcus equi subsp. zooepidemicus (strain H70).